Reading from the N-terminus, the 278-residue chain is HTH-type transcriptional activator RhaS (278 aa).

The region spanning 174–272 (NQLMAWLEDH…SWSPREIRQG (99 aa)) is the HTH araC/xylS-type domain. DNA-binding regions (H-T-H motif) lie at residues 191-212 (ETVA…KQHT) and 239-262 (VTDI…RREF).

Binds DNA as a dimer.

It is found in the cytoplasm. In terms of biological role, activates expression of the rhaBAD and rhaT operons. This chain is HTH-type transcriptional activator RhaS, found in Enterobacter sp. (strain 638).